A 902-amino-acid chain; its full sequence is Translation initiation factor IF-2 (902 aa).

Composition is skewed to basic and acidic residues over residues 1–12 and 43–60; these read MVDTKTPGDKKL and VVEK…EPHA. Positions 1 to 276 are disordered; the sequence is MVDTKTPGDK…KPGPQKERGR (276 aa). A compositionally biased stretch (pro residues) spans 69 to 84; sequence PAAPAPSRPAPPPAPP. The segment covering 111-174 has biased composition (basic and acidic residues); it reads AKLREVEERR…ETEAKKRFGE (64 aa). Low complexity-rich tracts occupy residues 181-190 and 198-237; these read AARPATAAPA and APAA…AVAA. The tr-type G domain maps to 398–567; the sequence is TRSPVVTVMG…MIALQADILD (170 aa). Residues 407–414 are G1; it reads GHVDHGKT. GTP is bound at residue 407 to 414; that stretch reads GHVDHGKT. Positions 432–436 are G2; sequence GITQH. A G3 region spans residues 455-458; sequence DTPG. GTP is bound by residues 455-459 and 509-512; these read DTPGH and NKID. The tract at residues 509–512 is G4; sequence NKID. The tract at residues 545–547 is G5; that stretch reads SAK.

It belongs to the TRAFAC class translation factor GTPase superfamily. Classic translation factor GTPase family. IF-2 subfamily.

Its subcellular location is the cytoplasm. Its function is as follows. One of the essential components for the initiation of protein synthesis. Protects formylmethionyl-tRNA from spontaneous hydrolysis and promotes its binding to the 30S ribosomal subunits. Also involved in the hydrolysis of GTP during the formation of the 70S ribosomal complex. This is Translation initiation factor IF-2 from Bradyrhizobium diazoefficiens (strain JCM 10833 / BCRC 13528 / IAM 13628 / NBRC 14792 / USDA 110).